A 211-amino-acid chain; its full sequence is ATP-dependent dethiobiotin synthetase BioD (211 aa).

13-18 is a binding site for ATP; sequence GVGKTV. Position 17 (Thr17) interacts with Mg(2+). The active site involves Lys33. Cys47 and Glu101 together coordinate Mg(2+). ATP is bound by residues 101-104, 185-187, and Asn192; these read EGAG and PWL.

It belongs to the dethiobiotin synthetase family. In terms of assembly, homodimer. Requires Mg(2+) as cofactor.

It is found in the cytoplasm. It carries out the reaction (7R,8S)-7,8-diammoniononanoate + CO2 + ATP = (4R,5S)-dethiobiotin + ADP + phosphate + 3 H(+). It functions in the pathway cofactor biosynthesis; biotin biosynthesis; biotin from 7,8-diaminononanoate: step 1/2. Its function is as follows. Catalyzes a mechanistically unusual reaction, the ATP-dependent insertion of CO2 between the N7 and N8 nitrogen atoms of 7,8-diaminopelargonic acid (DAPA, also called 7,8-diammoniononanoate) to form a ureido ring. In Bradyrhizobium diazoefficiens (strain JCM 10833 / BCRC 13528 / IAM 13628 / NBRC 14792 / USDA 110), this protein is ATP-dependent dethiobiotin synthetase BioD.